A 766-amino-acid chain; its full sequence is AMP deaminase 3 (766 aa).

Residues Ser-85 and Ser-107 each carry the phosphoserine modification. The segment at Gln-89 to Pro-114 is disordered. Residues Pro-99 to Thr-110 show a composition bias toward low complexity. Zn(2+)-binding residues include His-316 and His-318. Substrate contacts are provided by residues His-318 and Lys-387–Tyr-392. His-585 contacts Zn(2+). Residue Glu-588 participates in substrate binding. His-607 acts as the Proton acceptor in catalysis. Asp-662 is a Zn(2+) binding site. Position 663-666 (Asp-663–Gln-666) interacts with substrate.

Belongs to the metallo-dependent hydrolases superfamily. Adenosine and AMP deaminases family. Homotetramer. Zn(2+) serves as cofactor. As to expression, found in heart, lung brain, spleen, kidney and to a lesser extent in liver.

The catalysed reaction is AMP + H2O + H(+) = IMP + NH4(+). It functions in the pathway purine metabolism; IMP biosynthesis via salvage pathway; IMP from AMP: step 1/1. AMP deaminase plays a critical role in energy metabolism. The protein is AMP deaminase 3 of Mus musculus (Mouse).